A 480-amino-acid polypeptide reads, in one-letter code: Ribulose bisphosphate carboxylase large chain (480 aa).

Residues 1–2 (MS) constitute a propeptide that is removed on maturation. At Pro3 the chain carries N-acetylproline. Lys14 is modified (N6,N6,N6-trimethyllysine). Asn123 and Thr173 together coordinate substrate. Residue Lys175 is the Proton acceptor of the active site. Lys177 is a binding site for substrate. Mg(2+) contacts are provided by Lys201, Asp203, and Glu204. At Lys201 the chain carries N6-carboxylysine. Catalysis depends on His294, which acts as the Proton acceptor. The substrate site is built by Arg295, His327, and Ser379.

Belongs to the RuBisCO large chain family. Type I subfamily. In terms of assembly, heterohexadecamer of 8 large chains and 8 small chains; disulfide-linked. The disulfide link is formed within the large subunit homodimers. Mg(2+) serves as cofactor. The disulfide bond which can form in the large chain dimeric partners within the hexadecamer appears to be associated with oxidative stress and protein turnover.

Its subcellular location is the plastid. It is found in the chloroplast. The enzyme catalyses 2 (2R)-3-phosphoglycerate + 2 H(+) = D-ribulose 1,5-bisphosphate + CO2 + H2O. It catalyses the reaction D-ribulose 1,5-bisphosphate + O2 = 2-phosphoglycolate + (2R)-3-phosphoglycerate + 2 H(+). RuBisCO catalyzes two reactions: the carboxylation of D-ribulose 1,5-bisphosphate, the primary event in carbon dioxide fixation, as well as the oxidative fragmentation of the pentose substrate in the photorespiration process. Both reactions occur simultaneously and in competition at the same active site. This is Ribulose bisphosphate carboxylase large chain from Alluaudia procera (Madagascan ocotillo).